Here is a 90-residue protein sequence, read N- to C-terminus: Guanine nucleotide-binding protein subunit gamma (90 aa).

Residue Cys86 is the site of S-palmitoyl cysteine attachment. Cys87 carries the post-translational modification Cysteine methyl ester. Cys87 carries the S-farnesyl cysteine lipid modification. Positions 88–90 (TIM) are cleaved as a propeptide — removed in mature form.

It belongs to the G protein gamma family. In terms of assembly, g proteins are composed of 3 units, alpha, beta and gamma.

The protein localises to the membrane. This Kluyveromyces lactis (strain ATCC 8585 / CBS 2359 / DSM 70799 / NBRC 1267 / NRRL Y-1140 / WM37) (Yeast) protein is Guanine nucleotide-binding protein subunit gamma.